A 232-amino-acid chain; its full sequence is Ion-translocating oxidoreductase complex subunit E (232 aa).

6 helical membrane passes run 18 to 38 (GLVQLLGLCPLLAVTATLTNA), 39 to 59 (IGLGLATLVVLVGSNVLVSLV), 69 to 89 (IPVFVMIIAALVTCVQLLINA), 93 to 113 (GLYLSLGIFLPLIVTNCVIIG), 127 to 147 (AAFDGLMMGLGFTLVLMLLGA), and 182 to 202 (NFLLAMLPPGAFIAMGFLIAI).

Belongs to the NqrDE/RnfAE family. In terms of assembly, the complex is composed of six subunits: RnfA, RnfB, RnfC, RnfD, RnfE and RnfG.

Its subcellular location is the cell inner membrane. In terms of biological role, part of a membrane-bound complex that couples electron transfer with translocation of ions across the membrane. The sequence is that of Ion-translocating oxidoreductase complex subunit E from Shewanella loihica (strain ATCC BAA-1088 / PV-4).